The following is a 396-amino-acid chain: MSRKQAAKSRPGSGGRRAEAERKRDERAARRALAKERRNRPDPGGSGCEEEFVSFANQLQALGLKLREVPGDGNCLFRALGDQLEGHSRNHLKHRQETVDYMIRQREDFEPFVEDDIPFEKHVASLSKPGTFAGNDAIVAFARNHQLNVVIHQLNAPLWQIRGTDKGSTRELHIAYRYGEHYDSVRRINDNSEAPAHLLTDFQMLHQDGANKKEKMKTKGVDVKDGLRDDVEDAVHKVGSATGCTDFNLIVQNLEAENYNIKSAITALLQVNQGTGNDAEENHEPGDRVKQRGPSREEAGSGRRLSGNQGRNEGRMETSEARASPAEESKAHKSQLPKVTNKQRREQQRLEKKKRQEERHRLKALENRNGSRDTGRSEADMNTQVTLVKTFAALNI.

Positions 1-49 are disordered; the sequence is MSRKQAAKSRPGSGGRRAEAERKRDERAARRALAKERRNRPDPGGSGCE. Basic and acidic residues predominate over residues 16-41; that stretch reads RRAEAERKRDERAARRALAKERRNRP. Positions 64-188 constitute an OTU domain; the sequence is LKLREVPGDG…GEHYDSVRRI (125 aa). At K65 the chain carries N6-acetyllysine. Positions 69 to 75 are cys-loop; that stretch reads VPGDGNC. Residue D72 is part of the active site. The active-site Nucleophile is the C75. N6-acetyllysine occurs at positions 121 and 128. The segment at 126–136 is variable-loop; that stretch reads LSKPGTFAGND. The tract at residues 176-181 is his-loop; sequence YRYGEH. H181 is an active-site residue. K219 is subject to N6-acetyllysine. Positions 229-269 constitute a UBA-like domain; the sequence is DDVEDAVHKVGSATGCTDFNLIVQNLEAENYNIKSAITALL. Residues 275–381 are disordered; sequence TGNDAEENHE…RDTGRSEADM (107 aa). Basic and acidic residues-rich tracts occupy residues 280–301, 312–331, and 343–379; these read EENH…EAGS, NEGR…ESKA, and QRRE…RSEA. K290 carries the N6-acetyllysine modification.

Post-translationally, glucose and fatty acids stimulate CREBBP-dependent acetylation, promoting its nuclear translocation.

Its subcellular location is the cytoplasm. The protein resides in the nucleus. The enzyme catalyses Thiol-dependent hydrolysis of ester, thioester, amide, peptide and isopeptide bonds formed by the C-terminal Gly of ubiquitin (a 76-residue protein attached to proteins as an intracellular targeting signal).. Functionally, deubiquitinating enzyme that hydrolyzes 'Lys-6'- and 'Lys-11'-linked polyubiquitin. Also hydrolyzes heterotypic (mixed and branched) and homotypic chains. Important regulator of energy metabolism. Glucose and fatty acids trigger its nuclear translocation by CBP-dependent acetylation. In the nucleus, deubiquitinates and stabilizes the nuclear receptor PPARD regulating the expression of various genes involved in glucose and lipid metabolism and oxidative phosphorylation. Also acts as a negative regulator of the ribosome quality control (RQC) by mediating deubiquitination of 40S ribosomal proteins RPS10/eS10 and RPS20/uS10, thereby antagonizing ZNF598-mediated 40S ubiquitination. The chain is OTU domain-containing protein 3 (Otud3) from Mus musculus (Mouse).